The chain runs to 1265 residues: MSRTASYAGMTTPVKDKEGHGIPCLQPIDVVECTYQYFTKSQNKLSLRVGDLIYVLTKGSNGWWDGVLIRHSANNNNNSLILDRGWFPPSFTRSILNELHGVPEIGNELEIFQAGLNLKLELSSNPVILSLEDFLDCCRDIEFKEQLAWSPIPVHERKGCCELLYYNQDLDVYCRTLPYLPQNQVETVNDYSSFPAISKIAGKKMPITSSPDLFYLNDCDVVYWYDLTRLVCHYVNLTERDLLANEREKFLTSLDLLTAQITCVYMLFRNLRLVEDSFKKTLKKLIYTLSRFSINANIWFHSTPFEEREAIASQKDPERRSPLLQSILGTFQKFHFLLRLLHFLSNPNELTILPQLTPRFFKDSFNTISWNNPFLRKHLNQHMSHDLPRQMIKAVAGASGIVAENNDEIPASKQGTSCSSETSHHSPSAPFQRRRRGTIFSNVPGSSDESDTIWSKRKKPYPLNEETLSLVRARKEQLDAKLKQMIKSANEYLSNTANFSKMLNFEMNFKTYEEVSGTIPIIDILENLDLTIYLNLRELGDENRVFDEDVAIDDEDKEFLKHSLSSLSYILSDYFNMKQYFHDVVVKFIIVAQHLTLEDPFVFSPMQNDLPTGYYEPMKPSSLNLDNAKDKKNGSQNTDIQEEEDEYEPDPDSLILFHNLINQDSDFNDLKFFNLAHVFKKSCDDYFDVLKLSIEFVNRLILERENLLNYAARMMKNNITELLLRGEEGYGSYDGGETAEKSDTNAVYADSDTKDNDEWRDSQVKLPRYLQREYDSELIWGSNNRIKGGSKHALISYLTDNEKKDLFFNITFLITFRSIFTTTEFLSYLISQYNLDPPEDLCFEEYNEWVTKKLIPVKCRVVEIMTTFFKQYWFPGYDEPDLATLNLDYFAQVAIKENITGSVELLKEVNQKFKHGNMQEATAPMKTLDQQICQEHYWGTLYSTTESILAVDPVLFATQLTILEHEIYCEITIFDCLQKIWKNKYTKSYGASPGLNEFISFANKLTNFISYSIVKEADKSKRAKLLSHFIFIAEYCRKFNNFSSMTAIISALYSSSIYRLEKTWQAVIPQTRDLLQSLDKLMDPKKNFINYRSELKSLHSAPCVPFFGVYLSDLTFTDSGNPDYLVLEHGLKGVHDEKKYINFNKRSRLVDILQEIIYFKKTHYDFTKDRTVIECISNSLENIPHIEKQYQLSLIIEPKPRKKVVPNSNSNNKSQEKSRDDQTDEGKTSTKKDRFSKFQLHKTKKKAPKVSKQRRRMFDFLLSVD.

Residues 26 to 97 enclose the SH3 domain; it reads QPIDVVECTY…PPSFTRSILN (72 aa). 2 disordered regions span residues 409–454 and 623–648; these read IPAS…DTIW and LNLDNAKDKKNGSQNTDIQEEEDEYE. Positions 416–428 are enriched in low complexity; that stretch reads TSCSSETSHHSPS. An N-terminal Ras-GEF domain is found at 782-914; the sequence is SNNRIKGGSK…LLKEVNQKFK (133 aa). The 248-residue stretch at 952–1199 folds into the Ras-GEF domain; it reads DPVLFATQLT…YQLSLIIEPK (248 aa). Positions 1201–1252 are disordered; sequence RKKVVPNSNSNNKSQEKSRDDQTDEGKTSTKKDRFSKFQLHKTKKKAPKVSK. Residues 1214 to 1236 show a composition bias toward basic and acidic residues; that stretch reads SQEKSRDDQTDEGKTSTKKDRFS. A compositionally biased stretch (basic residues) spans 1239-1252; sequence QLHKTKKKAPKVSK.

Functionally, promotes the exchange of Ras-bound GDP by GTP. The sequence is that of Guanine nucleotide exchange factor SDC25 (SDC25) from Saccharomyces cerevisiae (strain AWRI1631) (Baker's yeast).